A 399-amino-acid polypeptide reads, in one-letter code: Probable peptidoglycan glycosyltransferase FtsW (399 aa).

A run of 9 helical transmembrane segments spans residues 19–39 (PLPV…VMIS), 61–81 (ILFA…PVSW), 85–105 (SGWL…TPLG), 114–134 (WIPM…CLIA), 160–180 (VLGV…TVVL), 198–218 (FMPL…TQPY), 285–305 (LLGA…GLVI), 314–334 (MAFG…QAGI), and 350–370 (LPLV…IAVI).

Belongs to the SEDS family. FtsW subfamily.

It localises to the cell inner membrane. It carries out the reaction [GlcNAc-(1-&gt;4)-Mur2Ac(oyl-L-Ala-gamma-D-Glu-L-Lys-D-Ala-D-Ala)](n)-di-trans,octa-cis-undecaprenyl diphosphate + beta-D-GlcNAc-(1-&gt;4)-Mur2Ac(oyl-L-Ala-gamma-D-Glu-L-Lys-D-Ala-D-Ala)-di-trans,octa-cis-undecaprenyl diphosphate = [GlcNAc-(1-&gt;4)-Mur2Ac(oyl-L-Ala-gamma-D-Glu-L-Lys-D-Ala-D-Ala)](n+1)-di-trans,octa-cis-undecaprenyl diphosphate + di-trans,octa-cis-undecaprenyl diphosphate + H(+). The protein operates within cell wall biogenesis; peptidoglycan biosynthesis. Its function is as follows. Peptidoglycan polymerase that is essential for cell division. The protein is Probable peptidoglycan glycosyltransferase FtsW of Marinobacter nauticus (strain ATCC 700491 / DSM 11845 / VT8) (Marinobacter aquaeolei).